Consider the following 398-residue polypeptide: Bifunctional enzyme IspD/IspF (398 aa).

Positions 1–234 are 2-C-methyl-D-erythritol 4-phosphate cytidylyltransferase; the sequence is MTNSPRTAAI…SRLMAALGDI (234 aa). The interval 235 to 398 is 2-C-methyl-D-erythritol 2,4-cyclodiphosphate synthase; that stretch reads RTGTGYDVHA…LPWGADGLAG (164 aa). Positions 241 and 243 each coordinate a divalent metal cation. Residues 241–243 and 267–268 contribute to the 4-CDP-2-C-methyl-D-erythritol 2-phosphate site; these read DVH and HS. A divalent metal cation is bound at residue H275. 4-CDP-2-C-methyl-D-erythritol 2-phosphate-binding positions include 289–291, 365–368, F372, and R375; these read DIG and TTSE.

It in the N-terminal section; belongs to the IspD/TarI cytidylyltransferase family. IspD subfamily. This sequence in the C-terminal section; belongs to the IspF family. It depends on a divalent metal cation as a cofactor.

The enzyme catalyses 2-C-methyl-D-erythritol 4-phosphate + CTP + H(+) = 4-CDP-2-C-methyl-D-erythritol + diphosphate. It carries out the reaction 4-CDP-2-C-methyl-D-erythritol 2-phosphate = 2-C-methyl-D-erythritol 2,4-cyclic diphosphate + CMP. It functions in the pathway isoprenoid biosynthesis; isopentenyl diphosphate biosynthesis via DXP pathway; isopentenyl diphosphate from 1-deoxy-D-xylulose 5-phosphate: step 2/6. It participates in isoprenoid biosynthesis; isopentenyl diphosphate biosynthesis via DXP pathway; isopentenyl diphosphate from 1-deoxy-D-xylulose 5-phosphate: step 4/6. In terms of biological role, bifunctional enzyme that catalyzes the formation of 4-diphosphocytidyl-2-C-methyl-D-erythritol from CTP and 2-C-methyl-D-erythritol 4-phosphate (MEP) (IspD), and catalyzes the conversion of 4-diphosphocytidyl-2-C-methyl-D-erythritol 2-phosphate (CDP-ME2P) to 2-C-methyl-D-erythritol 2,4-cyclodiphosphate (ME-CPP) with a corresponding release of cytidine 5-monophosphate (CMP) (IspF). This Rhodopseudomonas palustris (strain ATCC BAA-98 / CGA009) protein is Bifunctional enzyme IspD/IspF.